Here is a 153-residue protein sequence, read N- to C-terminus: Regulatory protein RecX (153 aa).

This sequence belongs to the RecX family.

Its subcellular location is the cytoplasm. Its function is as follows. Modulates RecA activity. This is Regulatory protein RecX from Neisseria meningitidis serogroup C / serotype 2a (strain ATCC 700532 / DSM 15464 / FAM18).